Consider the following 288-residue polypeptide: Proteasome subunit beta (288 aa).

The propeptide at 1–57 (MTAGDPMRLHPGHALSSFTEHLRALAPELLGPNRFAALDGATGSSGGTGAKDIAPHG) is removed in mature form; by autocatalysis. Catalysis depends on threonine 58, which acts as the Nucleophile.

Belongs to the peptidase T1B family. As to quaternary structure, the 20S proteasome core is composed of 14 alpha and 14 beta subunits that assemble into four stacked heptameric rings, resulting in a barrel-shaped structure. The two inner rings, each composed of seven catalytic beta subunits, are sandwiched by two outer rings, each composed of seven alpha subunits. The catalytic chamber with the active sites is on the inside of the barrel. Has a gated structure, the ends of the cylinder being occluded by the N-termini of the alpha-subunits. Is capped by the proteasome-associated ATPase, ARC.

It is found in the cytoplasm. The enzyme catalyses Cleavage of peptide bonds with very broad specificity.. The protein operates within protein degradation; proteasomal Pup-dependent pathway. The formation of the proteasomal ATPase ARC-20S proteasome complex, likely via the docking of the C-termini of ARC into the intersubunit pockets in the alpha-rings, may trigger opening of the gate for substrate entry. Interconversion between the open-gate and close-gate conformations leads to a dynamic regulation of the 20S proteasome proteolysis activity. Its function is as follows. Component of the proteasome core, a large protease complex with broad specificity involved in protein degradation. This is Proteasome subunit beta from Nocardia farcinica (strain IFM 10152).